The primary structure comprises 174 residues: Protein CURVATURE THYLAKOID 1B, chloroplastic (174 aa).

The interval 1-20 is disordered; the sequence is MASLSVSSSSTIIDSRAPPS. Residues 1 to 63 constitute a chloroplast transit peptide; the sequence is MASLSVSSSS…RKIVRNVVTR (63 aa). An N-acetylalanine modification is found at Ala-64. At 64–100 the chain is on the stromal side; the sequence is ATTEVGEAPATTTEAETTELPEIVKTAQEAWEKVDDK. The helical transmembrane segment at 101 to 121 threads the bilayer; the sequence is YAIGSLAFAGVVALWGSAGMI. Residues 122–126 lie on the Lumenal side of the membrane; it reads SAIDR. The helical transmembrane segment at 127 to 147 threads the bilayer; sequence LPLVPGVLELVGIGYTGWFTY. Over 148-174 the chain is Stromal; sequence KNLVFKPDREALFEKVKSTYKDILGSS.

Belongs to the CURT family. In terms of assembly, homo- and heterodimers and trimers. Interacts with PSAL. In terms of processing, phosphorylated on either Thr-65 or Thr-66 by a threonine specific thylakoid kinase.

The protein localises to the plastid. The protein resides in the chloroplast thylakoid membrane. Its function is as follows. Determines thylakoid architecture by inducing membrane curvature. This is Protein CURVATURE THYLAKOID 1B, chloroplastic (CURT1B) from Arabidopsis thaliana (Mouse-ear cress).